Reading from the N-terminus, the 980-residue chain is LRR receptor-like serine/threonine-protein kinase SIK1 (980 aa).

Positions 1 to 24 (MAAARAPWLWWWVVVVVGVAVAEA) are cleaved as a signal peptide. Residues 25–588 (ASGGGGGGDG…HGQRVNISKT (564 aa)) are Extracellular-facing. 2 N-linked (GlcNAc...) asparagine glycosylation sites follow: N72 and N81. LRR repeat units lie at residues 75 to 98 (FAVL…IGEL), 99 to 122 (KNLQ…IGDC), 124 to 146 (SLKY…ISKL), 147 to 170 (KQLE…LSQI), 171 to 194 (PNLK…IYWN), 196 to 218 (VLQY…MCQL), 219 to 242 (TGLW…IGNC), 243 to 265 (TSFE…NIGF), 266 to 289 (LQVA…IGLM), 290 to 312 (QALA…ILGN), 314 to 337 (SYTG…LGNM), 338 to 361 (SKLS…LGKL), 362 to 385 (EELF…ISSC), 387 to 408 (ALNK…GFQK), 409 to 433 (LESL…LGHI), 435 to 457 (NLDT…IGDL), 458 to 480 (EHLL…EFGN), 481 to 505 (LRSV…LGQL), 507 to 529 (NLDS…LANC), and 531 to 554 (SLNN…NFSK). Residues N230 and N241 are each glycosylated (N-linked (GlcNAc...) asparagine). N312 and N336 each carry an N-linked (GlcNAc...) asparagine glycan. 3 N-linked (GlcNAc...) asparagine glycosylation sites follow: N381, N399, and N416. 2 N-linked (GlcNAc...) asparagine glycosylation sites follow: N464 and N493. 4 N-linked (GlcNAc...) asparagine glycosylation sites follow: N536, N541, N551, and N584. Residues 589–609 (AIACIILGFIILLCVLLLAIY) traverse the membrane as a helical segment. At 610-980 (KTNQPQPLVK…FGEVISKHTM (371 aa)) the chain is on the cytoplasmic side. Positions 653 to 923 (LSEKYIIGYG…EVARVLLSLL (271 aa)) constitute a Protein kinase domain. ATP-binding positions include 659–667 (IGYGASSTV) and K681. The active-site Proton acceptor is D778.

The protein belongs to the protein kinase superfamily. Ser/Thr protein kinase family. Autophosphorylated. As to expression, expressed in nodes, vascular bundles of stems, and anthers.

It is found in the cell membrane. It carries out the reaction L-seryl-[protein] + ATP = O-phospho-L-seryl-[protein] + ADP + H(+). The catalysed reaction is L-threonyl-[protein] + ATP = O-phospho-L-threonyl-[protein] + ADP + H(+). In terms of biological role, receptor kinase involved in salt drought stress responses. Acts as a positive regulator of salt and drought tolerance. May promote salt and drought tolerance through the induction of the activities of antioxidative enzymes, such as peroxidase, superoxide dismutase and catalase. May be involved in the control of stomatal development in leaf epidermis. Possesses kinase activity in vitro. Does not seem to be involved in heat tolerance. In Oryza sativa subsp. japonica (Rice), this protein is LRR receptor-like serine/threonine-protein kinase SIK1.